The chain runs to 315 residues: MSESLRIIFAGTPDFAARHLDALLSSGHNVVGVFTQPDRPAGRGKKLMPSPIKVLAEEKGLPVFQPVSLRPQENQQLVADLQADVMVVVAYGLILPKAVLEMPRLGCINVHGSLLPRWRGAAPIQRSLWAGDAETGVTIMQMDVGLDTGDMLYKLSCPITAEDTSGTLYDKLAELGPQGLITTLKQLADGTAKPEVQDETLVTYAEKLSKEEARIDWSLSAAQLERCIRAFNPWPMSWLEIEGQPVKVWKASVIDTATNAAPGTILEANKQGIQVATGDGILNLLSLQPAGKKAMSAQDLLNSRREWFVPGNRLV.

113–116 lines the (6S)-5,6,7,8-tetrahydrofolate pocket; it reads SLLP.

It belongs to the Fmt family.

It carries out the reaction L-methionyl-tRNA(fMet) + (6R)-10-formyltetrahydrofolate = N-formyl-L-methionyl-tRNA(fMet) + (6S)-5,6,7,8-tetrahydrofolate + H(+). Functionally, attaches a formyl group to the free amino group of methionyl-tRNA(fMet). The formyl group appears to play a dual role in the initiator identity of N-formylmethionyl-tRNA by promoting its recognition by IF2 and preventing the misappropriation of this tRNA by the elongation apparatus. This chain is Methionyl-tRNA formyltransferase, found in Escherichia coli O139:H28 (strain E24377A / ETEC).